The primary structure comprises 964 residues: E3 ubiquitin-protein ligase TRIM37 (964 aa).

Met-1 carries the N-acetylmethionine modification. The RING-type; degenerate zinc finger occupies 15–55 (CFICMEKLRDARLCPHCSKLCCFSCIRRWLTEQRAQCPHCR). A B box-type zinc finger spans residues 90-132 (NEKDKCENHHEKLSVFCWTCKKCICHQCALWGGMHGGHTFKPL). Cys-95, His-98, Cys-117, and His-124 together coordinate Zn(2+). The stretch at 132 to 234 (LAEIYEQHVT…VEHQLRSCSK (103 aa)) forms a coiled coil. The MATH domain maps to 276–403 (YDSATFVLEN…NDTVILRFQV (128 aa)). A coiled-coil region spans residues 419-450 (ITQLEAAQTSYIQQINNLKERLTIELSRTQKS). Phosphoserine is present on Ser-454. Disordered stretches follow at residues 477 to 513 (CSDM…HHEL), 530 to 554 (QLDG…IDEE), and 640 to 663 (RPPA…RKQQ). Residues 503 to 513 (KIQNEDYHHEL) are compositionally biased toward basic and acidic residues. A compositionally biased stretch (low complexity) spans 534–544 (SSSSASSTATS). Residues 673–700 (KMLKRLKTQMAEVRCMKTDVKNTLSEIK) are a coiled coil. Over residues 752–761 (NSTNKKSNSP) the composition is skewed to polar residues. Disordered regions lie at residues 752–812 (NSTN…SPRA) and 891–964 (GASA…NSGR). A compositionally biased stretch (basic and acidic residues) spans 776-788 (RAVDPGENSRSKG). Low complexity predominate over residues 794–807 (SEGSPGSSQSGSRH). Over residues 904–916 (SDIECDTENEEQE) the composition is skewed to acidic residues. A compositionally biased stretch (polar residues) spans 955–964 (SFNTDENSGR).

The protein belongs to the TRIM/RBCC family. Associates with the PRC2/EED-EZH2 complex. Auto-ubiquitinated. In terms of tissue distribution, ubiquitous. Highly expressed in testis, while it is weakly expressed in other tissues.

It is found in the chromosome. The protein localises to the cytoplasm. The protein resides in the perinuclear region. Its subcellular location is the peroxisome membrane. It catalyses the reaction S-ubiquitinyl-[E2 ubiquitin-conjugating enzyme]-L-cysteine + [acceptor protein]-L-lysine = [E2 ubiquitin-conjugating enzyme]-L-cysteine + N(6)-ubiquitinyl-[acceptor protein]-L-lysine.. The protein operates within protein modification; protein ubiquitination. In terms of biological role, E3 ubiquitin-protein ligase required to prevent centriole reduplication. Probably acts by ubiquitinating positive regulators of centriole reduplication. Mediates monoubiquitination of 'Lys-119' of histone H2A (H2AK119Ub), a specific tag for epigenetic transcriptional repression: associates with some Polycomb group (PcG) multiprotein PRC2-like complex and mediates repression of target genes. Also acts as a positive regulator of peroxisome import by mediating monoubiquitination of PEX5 at 'Lys-472': monoubiquitination promotes PEX5 stabilitation by preventing its polyubiquitination and degradation by the proteasome. Has anti-HIV activity. The polypeptide is E3 ubiquitin-protein ligase TRIM37 (Homo sapiens (Human)).